The primary structure comprises 459 residues: Glycerol-3-phosphate acyltransferase, chloroplastic (459 aa).

Residues 1–90 (MTLTFSSSAA…FNEAAGETPS (90 aa)) constitute a chloroplast transit peptide. The short motif at 229 to 234 (HQSEAD) is the HXXXXD motif element.

The protein belongs to the GPAT/DAPAT family.

The protein localises to the plastid. It localises to the chloroplast stroma. It catalyses the reaction sn-glycerol 3-phosphate + an acyl-CoA = a 1-acyl-sn-glycero-3-phosphate + CoA. Its pathway is phospholipid metabolism; CDP-diacylglycerol biosynthesis; CDP-diacylglycerol from sn-glycerol 3-phosphate: step 1/3. In terms of biological role, esterifies acyl-group from acyl-ACP to the sn-1 position of glycerol-3-phosphate. The enzyme from chilling-resistant plants discriminates against non-fluid palmitic acid and selects oleic acid whereas the enzyme from sensitive plants accepts both fatty acids. This is an oleate-selective acyltransferase. The polypeptide is Glycerol-3-phosphate acyltransferase, chloroplastic (ATS1) (Arabidopsis thaliana (Mouse-ear cress)).